The chain runs to 184 residues: Large ribosomal subunit protein uL22B (184 aa).

Lys46 participates in a covalent cross-link: Glycyl lysine isopeptide (Lys-Gly) (interchain with G-Cter in ubiquitin). At Thr70 the chain carries Phosphothreonine.

The protein belongs to the universal ribosomal protein uL22 family. As to quaternary structure, component of the large ribosomal subunit (LSU). Mature yeast ribosomes consist of a small (40S) and a large (60S) subunit. The 40S small subunit contains 1 molecule of ribosomal RNA (18S rRNA) and 33 different proteins (encoded by 57 genes). The large 60S subunit contains 3 rRNA molecules (25S, 5.8S and 5S rRNA) and 46 different proteins (encoded by 81 genes). uL22 is associated with the polypeptide exit tunnel.

The protein localises to the cytoplasm. In terms of biological role, component of the ribosome, a large ribonucleoprotein complex responsible for the synthesis of proteins in the cell. The small ribosomal subunit (SSU) binds messenger RNAs (mRNAs) and translates the encoded message by selecting cognate aminoacyl-transfer RNA (tRNA) molecules. The large subunit (LSU) contains the ribosomal catalytic site termed the peptidyl transferase center (PTC), which catalyzes the formation of peptide bonds, thereby polymerizing the amino acids delivered by tRNAs into a polypeptide chain. The nascent polypeptides leave the ribosome through a tunnel in the LSU and interact with protein factors that function in enzymatic processing, targeting, and the membrane insertion of nascent chains at the exit of the ribosomal tunnel. The protein is Large ribosomal subunit protein uL22B of Saccharomyces cerevisiae (strain ATCC 204508 / S288c) (Baker's yeast).